The chain runs to 307 residues: MSQNKIYDVAIIGAGPGALTAAIYTSRGNLDTVFIDNAAPGGKLIYASKIENWPGDTIVKGTDLAIRFFEHAQAFGAKYEYGKVVDLINIKDDLKELVLEDGKKIQAKSVIIASGMVSRKPREILNYDEFENRGVSYCVICDGPMYGHNPAIIIGGGNSAVEEGTFLSSIASKVYVIVRDSDFIAEKALVNDLKSRKNIEVLFNASVKELHGKDALEYAIVNHNGKEVKLEVASLFPYIGFLPSAEYAKNAGVLEPNGFIKTDEFMETKVPGIYAIGDIRIKDIRQILTATSDGTIAGKILTNRIKK.

FAD is bound at residue 36-43 (DNAAPGGK). The cysteines at positions 138 and 141 are disulfide-linked. 278–287 (DIRIKDIRQI) provides a ligand contact to FAD.

It belongs to the class-II pyridine nucleotide-disulfide oxidoreductase family. Homodimer. Requires FAD as cofactor.

The protein localises to the cytoplasm. It catalyses the reaction [thioredoxin]-dithiol + NADP(+) = [thioredoxin]-disulfide + NADPH + H(+). The sequence is that of Thioredoxin reductase (trxB) from Mycoplasmopsis pulmonis (strain UAB CTIP) (Mycoplasma pulmonis).